Here is a 1381-residue protein sequence, read N- to C-terminus: MKAPAVLTPGILLLLFTLVQKSNGECKEALTKSEMNVNMKYQLPNFTAETPIQNVILHEHHIFLGATNYIYVLNEEDLQKVAEHRTGPVLEHPDCFPCQDCSSKANLSGGVWKDNINMALVVDTYYDDQLISCGSVNRGTCQRHVFPHNHTADIQSEVHCIFSPQTEEPSQCPDCVVSALGTKVLLSVKERFLNFFVGNTINSSYVPDHSLHSISVRRLKETKDGFMFLTDQSYVDVLPEFRDSYPIKYVHAFESNNFIYFLAVQRETLNAQTFHTRIIRFCSINSALHSYMEMPLECILTEKRKKRSTKKEVFNILQAAYVSKPGAQLARQIGASLNDDILFGVFAQSKPDSAEPMDRSAVCAFPIKYVNDFFNKIVNKNNVRCLQHFYGPNHEHCFNRTFQRNFLGCETRRDEYRTEFTTALQRIDLFAGQFNKVLLTSISTFVKGDLTIANLGTSEGRFIQIVVSRSVPSTPHVNFLLDSHPVSPEVIVEHPLNHNGYTLVVTGKKITKIPLNGLGCRHFQSCSQCLSAPSFVQCGWCHDKCVRSEECSSGTWTQETCLPTIYKVFPTSAPLEGGTRLTICGWDFGFRRNNKFDLKKTRVLLGNESCTLTLSESTMNTLKCTVGPAMNEHFNMSIIISNAHGTTQYSTFSYVDPIITSISPRYGPMSGGTLLTLTGNYLNSGNSRHISIGGKTCTLKSVSNSILECYTPAQTISTEFPVKLKIDLANRETSIFSYREDPIVYEIHPTKSFISGGSTITGIGKNLNSVSVPRMVINLHEARRNFTVACQHRSNSEIICCTTPSLQQLNLQLPLKTKAFFMLDGILSKYFDLIYVHNPVFKPFEKPVMISMGNENVLEIKGNDIDPEAVKGEVLKVGNKSCENIHLHSEAVLCTVPSDLLKLNSELNIEWKQAISSTVLGKVIVQPDQNFTGLIAGVVSISIALLLLLGLFLWLKKRKQIKDLGSELVRYDARVHTPHLDRLVSARSVSPTTEMVSNESVDYRATFPEDQFPNSSQNGSCRQVQYPLTDMSPILTSGDSDISSPLLQNTVHIDLSALNPELVQAVQHVVIGPSSLIVHFNEVIGRGHFGCVYHGTLLDNDGKKIHCAVKSLNRITDIGEVSQFLTEGIIMKDFSHPNVLSLLGICLRSEGSPLVVLPYMKHGDLRNFIRNETHNPTVKDLIGFGLQVAKGMKYLASKKFVHRDLAARNCMLDEKFTVKVADFGLARDMYDKEYYSVHNKTGAKLPVKWMALESLQTQKFTTKSDVWSFGVLLWELMTRGAPPYPDVNTFDITVYLLQGRRLLQPEYCPDPLYEVMLKCWHPKAEMRPSFSELVSRISAIFSTFIGEHYVHVNATYVNVKCVAPYPSLLSSQDNADGELDT.

The first 24 residues, 1-24 (MKAPAVLTPGILLLLFTLVQKSNG), serve as a signal peptide directing secretion. The Extracellular segment spans residues 25-932 (ECKEALTKSE…VIVQPDQNFT (908 aa)). The 489-residue stretch at 27-515 (KEALTKSEMN…TGKKITKIPL (489 aa)) folds into the Sema domain. N45 is a glycosylation site (N-linked (GlcNAc...) asparagine). Disulfide bonds link C95/C101, C98/C160, C133/C141, and C172/C175. N106 is a glycosylation site (N-linked (GlcNAc...) asparagine). N-linked (GlcNAc...) asparagine glycosylation is present at N149. N202 is a glycosylation site (N-linked (GlcNAc...) asparagine). Cystine bridges form between C298/C363 and C385/C397. N-linked (GlcNAc...) asparagine glycosylation is present at N399. 4 cysteine pairs are disulfide-bonded: C520/C538, C526/C561, C529/C545, and C541/C551. IPT/TIG domains follow at residues 563 to 655 (PTIY…FSYV), 657 to 739 (PIIT…FSYR), and 742 to 836 (PIVY…LIYV). T582 carries an O-linked (Man) threonine glycan. N607 and N635 each carry an N-linked (GlcNAc...) asparagine glycan. O-linked (Man) threonine glycosylation is found at T676 and T761. N-linked (GlcNAc...) asparagine glycosylation is found at N785, N879, and N930. A helical transmembrane segment spans residues 933-955 (GLIAGVVSISIALLLLLGLFLWL). The Cytoplasmic segment spans residues 956–1381 (KKRKQIKDLG…QDNADGELDT (426 aa)). The residue at position 966 (S966) is a Phosphoserine. Position 977 is a phosphothreonine (T977). S990, S997, and S1000 each carry phosphoserine. Y1003 carries the post-translational modification Phosphotyrosine. A Protein kinase domain is found at 1078-1345 (VHFNEVIGRG…RISAIFSTFI (268 aa)). Residues 1084–1092 (IGRGHFGCV) and K1110 each bind ATP. The Proton acceptor role is filled by D1204. An interaction with RANBP9 region spans residues 1212-1381 (LDEKFTVKVA…QDNADGELDT (170 aa)). Phosphotyrosine is present on Y1230. 2 positions are modified to phosphotyrosine; by autocatalysis: Y1234 and Y1235. Residue T1289 is modified to Phosphothreonine. The segment at 1320-1359 (WHPKAEMRPSFSELVSRISAIFSTFIGEHYVHVNATYVNV) is interaction with MUC20. Phosphotyrosine; by autocatalysis is present on residues Y1349 and Y1356. Residue Y1365 is modified to Phosphotyrosine.

It belongs to the protein kinase superfamily. Tyr protein kinase family. Heterodimer made of an alpha chain (50 kDa) and a beta chain (145 kDa) which are disulfide linked. Binds PLXNB1. Interacts when phosphorylated with downstream effectors including STAT3, PIK3R1, SRC, PCLG1, GRB2 and GAB1. Interacts with SPSB1, SPSB2 and SPSB4. Interacts with INPP5D/SHIP1. When phosphorylated at Tyr-1356, interacts with INPPL1/SHIP2. Interacts with RANBP9 and RANBP10, as well as SPSB1, SPSB2, SPSB3 and SPSB4. SPSB1 binding occurs in the presence and in the absence of HGF, however HGF treatment has a positive effect on this interaction. Interacts with MUC20; prevents interaction with GRB2 and suppresses hepatocyte growth factor-induced cell proliferation. Interacts with GRB10. Interacts with PTPN1 and PTPN2. Interacts with HSP90AA1 and HSP90AB1; the interaction suppresses MET kinase activity. Interacts with tensin TNS3. Interacts (when phosphorylated) with tensin TNS4 (via SH2 domain); the interaction increases MET protein stability by inhibiting MET endocytosis and subsequent lysosomal degradation. Autophosphorylated in response to ligand binding on Tyr-1234 and Tyr-1235 in the kinase domain leading to further phosphorylation of Tyr-1349 and Tyr-1356 in the C-terminal multifunctional docking site. Dephosphorylated by PTPRJ at Tyr-1349 and Tyr-1365. Dephosphorylated by PTPN1 and PTPN2. Post-translationally, ubiquitinated. Ubiquitination by CBL regulates the receptor stability and activity through proteasomal degradation. In terms of processing, O-mannosylation of IPT/TIG domains by TMEM260 is required for protein maturation. O-mannosylated residues are composed of single mannose glycans that are not elongated or modified.

The protein resides in the membrane. The enzyme catalyses L-tyrosyl-[protein] + ATP = O-phospho-L-tyrosyl-[protein] + ADP + H(+). With respect to regulation, in its inactive state, the C-terminal tail interacts with the catalytic domain and inhibits the kinase activity. Upon ligand binding, the C-terminal tail is displaced and becomes phosphorylated, thus increasing the kinase activity. Functionally, receptor tyrosine kinase that transduces signals from the extracellular matrix into the cytoplasm by binding to hepatocyte growth factor/HGF ligand. Regulates many physiological processes including proliferation, scattering, morphogenesis and survival. Ligand binding at the cell surface induces autophosphorylation of MET on its intracellular domain that provides docking sites for downstream signaling molecules. Following activation by ligand, interacts with the PI3-kinase subunit PIK3R1, PLCG1, SRC, GRB2, STAT3 or the adapter GAB1. Recruitment of these downstream effectors by MET leads to the activation of several signaling cascades including the RAS-ERK, PI3 kinase-AKT, or PLCgamma-PKC. The RAS-ERK activation is associated with the morphogenetic effects while PI3K/AKT coordinates prosurvival effects. During embryonic development, MET signaling plays a role in gastrulation, development and migration of muscles and neuronal precursors, angiogenesis and kidney formation. In adults, participates in wound healing as well as organ regeneration and tissue remodeling. Also promotes differentiation and proliferation of hematopoietic cells. This is Hepatocyte growth factor receptor (MET) from Saimiri boliviensis boliviensis (Bolivian squirrel monkey).